The following is a 545-amino-acid chain: Methionine--tRNA ligase (545 aa).

The 'HIGH' region motif lies at 15 to 25; that stretch reads PYANGPIHLGH. Cys-146, Cys-149, Cys-159, and Cys-162 together coordinate Zn(2+). Positions 332 to 336 match the 'KMSKS' region motif; that stretch reads KMSKS. Lys-335 serves as a coordination point for ATP.

The protein belongs to the class-I aminoacyl-tRNA synthetase family. MetG type 1 subfamily. As to quaternary structure, monomer. Requires Zn(2+) as cofactor.

It localises to the cytoplasm. The enzyme catalyses tRNA(Met) + L-methionine + ATP = L-methionyl-tRNA(Met) + AMP + diphosphate. Its function is as follows. Is required not only for elongation of protein synthesis but also for the initiation of all mRNA translation through initiator tRNA(fMet) aminoacylation. This Hamiltonella defensa subsp. Acyrthosiphon pisum (strain 5AT) protein is Methionine--tRNA ligase.